The chain runs to 356 residues: DNA polymerase IV (356 aa).

Residues 1 to 188 (MDTSRKIIHI…IPVTKFYGVG (188 aa)) form the UmuC domain. Residues Asp-11 and Asp-106 each coordinate Mg(2+). The active site involves Glu-107.

Belongs to the DNA polymerase type-Y family. In terms of assembly, monomer. Mg(2+) serves as cofactor.

Its subcellular location is the cytoplasm. It carries out the reaction DNA(n) + a 2'-deoxyribonucleoside 5'-triphosphate = DNA(n+1) + diphosphate. Its function is as follows. Poorly processive, error-prone DNA polymerase involved in untargeted mutagenesis. Copies undamaged DNA at stalled replication forks, which arise in vivo from mismatched or misaligned primer ends. These misaligned primers can be extended by PolIV. Exhibits no 3'-5' exonuclease (proofreading) activity. May be involved in translesional synthesis, in conjunction with the beta clamp from PolIII. The sequence is that of DNA polymerase IV from Listeria innocua serovar 6a (strain ATCC BAA-680 / CLIP 11262).